The following is a 403-amino-acid chain: Ribosomal RNA large subunit methyltransferase I (403 aa).

One can recognise a PUA domain in the interval 9–88 (YPRLVLSKGR…EPVDIAFFTR (80 aa)).

It belongs to the methyltransferase superfamily. RlmI family.

Its subcellular location is the cytoplasm. It carries out the reaction cytidine(1962) in 23S rRNA + S-adenosyl-L-methionine = 5-methylcytidine(1962) in 23S rRNA + S-adenosyl-L-homocysteine + H(+). Its function is as follows. Specifically methylates the cytosine at position 1962 (m5C1962) of 23S rRNA. This is Ribosomal RNA large subunit methyltransferase I from Salmonella arizonae (strain ATCC BAA-731 / CDC346-86 / RSK2980).